Reading from the N-terminus, the 664-residue chain is MSLQRIVRVSLEHPTSAVCVAGVETLVDIYGSVPEGTEMFEVYGTPGVDIYISPNMERGRERADTRRWRFDATLEIIVVMNSPSNDLNDSHVQISYHSSHEPLPLAYAVLYLTCVDISLDCDLNCEGRQDRNFVDKRQWVWGPSGYGGILLVNCDRDDPSCDVQDNCDQHVHCLQDLEDMSVMVLRTQGPAALFDDHKLVLHTSSYDAKRAQVFHICGPEDVCEAYRHVLGQDKVSYEVPRLHGDEERFFVEGLSFPDAGFTGLISFHVTLLDDSNEDFSASPIFTDTVVFRVAPWIMTPSTLPPLEVYVCRVRNNTCFVDAVAELARKAGCKLTICPQAENRNDRWIQDEMELGYVQAPHKTLPVVFDSPRNGELQDFPYKRILGPDFGYVTREPRDRSVSGLDSFGNLEVSPPVVANGKEYPLGRILIGGNLPGSSGRRVTQVVRDFLHAQKVQPPVELFVDWLAVGHVDEFLSFVPAPDGKGFRMLLASPGACFKLFQEKQKCGHGRALLFQGVVDDEQVKTISINQVLSNKDLINYNKFVQSCIDWNREVLKRELGLAECDIIDIPQLFKTERKKATAFFPDLVNMLVLGKHLGIPKPFGPIINGCCCLEEKVRSLLEPLGLHCTFIDDFTPYHMLHGEVHCGTNVCRKPFSFKWWNMVP.

Belongs to the protein arginine deiminase family. Ca(2+) serves as cofactor. As to expression, hair follicles, and epidermis at very low levels.

Its subcellular location is the cytoplasm. It carries out the reaction L-arginyl-[protein] + H2O = L-citrullyl-[protein] + NH4(+). Functionally, catalyzes the deimination of arginine residues of proteins. The polypeptide is Protein-arginine deiminase type-3 (PADI3) (Homo sapiens (Human)).